Here is a 353-residue protein sequence, read N- to C-terminus: Photosystem II D2 protein (353 aa).

T2 carries the N-acetylthreonine modification. T2 is subject to Phosphothreonine. Residues 41–61 (CAYFALGGWFTGTTFVTSWYT) traverse the membrane as a helical segment. H118 is a binding site for chlorophyll a. Residues 125–141 (GFMLRQFELARSVQLRP) traverse the membrane as a helical segment. Positions 130 and 143 each coordinate pheophytin a. A helical membrane pass occupies residues 153–166 (VFVSVFLIYPLGQS). Residue H198 coordinates chlorophyll a. The helical transmembrane segment at 208–228 (AALLCAIHGATVENTLFEDGD) threads the bilayer. A plastoquinone contacts are provided by H215 and F262. Residue H215 coordinates Fe cation. H269 serves as a coordination point for Fe cation. Residues 279–295 (GLWMSAIGVVGLALNLR) form a helical membrane-spanning segment.

It belongs to the reaction center PufL/M/PsbA/D family. In terms of assembly, PSII is composed of 1 copy each of membrane proteins PsbA, PsbB, PsbC, PsbD, PsbE, PsbF, PsbH, PsbI, PsbJ, PsbK, PsbL, PsbM, PsbT, PsbX, PsbY, PsbZ, Psb30/Ycf12, at least 3 peripheral proteins of the oxygen-evolving complex and a large number of cofactors. It forms dimeric complexes. The cofactor is The D1/D2 heterodimer binds P680, chlorophylls that are the primary electron donor of PSII, and subsequent electron acceptors. It shares a non-heme iron and each subunit binds pheophytin, quinone, additional chlorophylls, carotenoids and lipids. There is also a Cl(-1) ion associated with D1 and D2, which is required for oxygen evolution. The PSII complex binds additional chlorophylls, carotenoids and specific lipids..

The protein resides in the plastid. It is found in the chloroplast thylakoid membrane. It catalyses the reaction 2 a plastoquinone + 4 hnu + 2 H2O = 2 a plastoquinol + O2. In terms of biological role, photosystem II (PSII) is a light-driven water:plastoquinone oxidoreductase that uses light energy to abstract electrons from H(2)O, generating O(2) and a proton gradient subsequently used for ATP formation. It consists of a core antenna complex that captures photons, and an electron transfer chain that converts photonic excitation into a charge separation. The D1/D2 (PsbA/PsbD) reaction center heterodimer binds P680, the primary electron donor of PSII as well as several subsequent electron acceptors. D2 is needed for assembly of a stable PSII complex. The sequence is that of Photosystem II D2 protein from Drimys granadensis.